The chain runs to 207 residues: MPKVALYDMSGAQVGEIELNDSVFGIKPNQAVMFDFVKMQLANKRAGTASSKTRAEVRGGGKKPWRQKGTGRARVGSSRNPVWTKGGVAFGPRPRDFSYRLPRKVRRLAMKSALSSKVLDNNIVVLDSLTFDEPKTRLMVQTLKSLPVGKKTLVVTAYGDPNVIKSARNIPGVKPLRADFINVYDLLNYDTLLITREAVARIEEVFA.

Positions 47–78 (GTASSKTRAEVRGGGKKPWRQKGTGRARVGSS) are disordered. A compositionally biased stretch (basic residues) spans 60 to 71 (GGKKPWRQKGTG).

Belongs to the universal ribosomal protein uL4 family. In terms of assembly, part of the 50S ribosomal subunit.

Its function is as follows. One of the primary rRNA binding proteins, this protein initially binds near the 5'-end of the 23S rRNA. It is important during the early stages of 50S assembly. It makes multiple contacts with different domains of the 23S rRNA in the assembled 50S subunit and ribosome. In terms of biological role, forms part of the polypeptide exit tunnel. This chain is Large ribosomal subunit protein uL4, found in Syntrophomonas wolfei subsp. wolfei (strain DSM 2245B / Goettingen).